Consider the following 328-residue polypeptide: GTP 3',8-cyclase (328 aa).

The region spanning 9-229 is the Radical SAM core domain; the sequence is GFGRDVRYLR…DNGLNTGGPA (221 aa). Arginine 18 is a GTP binding site. 2 residues coordinate [4Fe-4S] cluster: cysteine 25 and cysteine 29. Tyrosine 31 lines the S-adenosyl-L-methionine pocket. Cysteine 32 contributes to the [4Fe-4S] cluster binding site. Arginine 60 is a GTP binding site. Residue glycine 64 coordinates S-adenosyl-L-methionine. Residue threonine 94 coordinates GTP. Serine 118 is a binding site for S-adenosyl-L-methionine. A GTP-binding site is contributed by lysine 154. Methionine 188 serves as a coordination point for S-adenosyl-L-methionine. The [4Fe-4S] cluster site is built by cysteine 252 and cysteine 255. 257–259 is a GTP binding site; it reads RVR. Residue cysteine 269 coordinates [4Fe-4S] cluster.

Belongs to the radical SAM superfamily. MoaA family. As to quaternary structure, monomer and homodimer. It depends on [4Fe-4S] cluster as a cofactor.

The enzyme catalyses GTP + AH2 + S-adenosyl-L-methionine = (8S)-3',8-cyclo-7,8-dihydroguanosine 5'-triphosphate + 5'-deoxyadenosine + L-methionine + A + H(+). The protein operates within cofactor biosynthesis; molybdopterin biosynthesis. Functionally, catalyzes the cyclization of GTP to (8S)-3',8-cyclo-7,8-dihydroguanosine 5'-triphosphate. The polypeptide is GTP 3',8-cyclase (Rhodobacter capsulatus (Rhodopseudomonas capsulata)).